The following is a 120-amino-acid chain: Large ribosomal subunit protein uL18 (120 aa).

Belongs to the universal ribosomal protein uL18 family. As to quaternary structure, part of the 50S ribosomal subunit; part of the 5S rRNA/L5/L18/L25 subcomplex. Contacts the 5S and 23S rRNAs.

This is one of the proteins that bind and probably mediate the attachment of the 5S RNA into the large ribosomal subunit, where it forms part of the central protuberance. This is Large ribosomal subunit protein uL18 from Brevibacillus brevis (strain 47 / JCM 6285 / NBRC 100599).